We begin with the raw amino-acid sequence, 37 residues long: Large ribosomal subunit protein bL36 (37 aa).

This sequence belongs to the bacterial ribosomal protein bL36 family.

This Mycobacterium ulcerans (strain Agy99) protein is Large ribosomal subunit protein bL36.